The chain runs to 236 residues: (5-formylfuran-3-yl)methyl phosphate synthase (236 aa).

K27 functions as the Schiff-base intermediate with substrate in the catalytic mechanism. K85 functions as the Proton acceptor in the catalytic mechanism.

The protein belongs to the MfnB family.

The enzyme catalyses 2 D-glyceraldehyde 3-phosphate = 4-(hydroxymethyl)-2-furancarboxaldehyde phosphate + phosphate + 2 H2O. Its pathway is cofactor biosynthesis; methanofuran biosynthesis. Its function is as follows. Catalyzes the formation of 4-(hydroxymethyl)-2-furancarboxaldehyde phosphate (4-HFC-P) from two molecules of glyceraldehyde-3-P (GA-3-P). This chain is (5-formylfuran-3-yl)methyl phosphate synthase, found in Methanococcus maripaludis (strain C5 / ATCC BAA-1333).